We begin with the raw amino-acid sequence, 379 residues long: Anhydro-N-acetylmuramic acid kinase (379 aa).

An ATP-binding site is contributed by 9 to 16 (GTSADGVD).

This sequence belongs to the anhydro-N-acetylmuramic acid kinase family.

It catalyses the reaction 1,6-anhydro-N-acetyl-beta-muramate + ATP + H2O = N-acetyl-D-muramate 6-phosphate + ADP + H(+). Its pathway is amino-sugar metabolism; 1,6-anhydro-N-acetylmuramate degradation. It participates in cell wall biogenesis; peptidoglycan recycling. In terms of biological role, catalyzes the specific phosphorylation of 1,6-anhydro-N-acetylmuramic acid (anhMurNAc) with the simultaneous cleavage of the 1,6-anhydro ring, generating MurNAc-6-P. Is required for the utilization of anhMurNAc either imported from the medium or derived from its own cell wall murein, and thus plays a role in cell wall recycling. The chain is Anhydro-N-acetylmuramic acid kinase from Prochlorococcus marinus (strain MIT 9313).